We begin with the raw amino-acid sequence, 194 residues long: Large ribosomal subunit protein bL9 (194 aa).

The interval 148-194 (QDEAERQARGENVINSQFEEDRAAEAEAAQDMAEGGAGSFEGDHYEA) is disordered.

This sequence belongs to the bacterial ribosomal protein bL9 family.

In terms of biological role, binds to the 23S rRNA. In Caulobacter vibrioides (strain ATCC 19089 / CIP 103742 / CB 15) (Caulobacter crescentus), this protein is Large ribosomal subunit protein bL9.